The sequence spans 223 residues: UPF0758 protein Tgr7_0100 (223 aa).

An MPN domain is found at 102–223; it reads ALTSPDDTRR…LVSFAERGLL (122 aa). Zn(2+) contacts are provided by His-173, His-175, and Asp-186. The JAMM motif motif lies at 173-186; it reads HNHPSGVAEPSRSD.

Belongs to the UPF0758 family.

This Thioalkalivibrio sulfidiphilus (strain HL-EbGR7) protein is UPF0758 protein Tgr7_0100.